We begin with the raw amino-acid sequence, 444 residues long: Tubulin beta-8 chain (444 aa).

An MREI motif motif is present at residues 1–4 (MREI). GTP-binding residues include glutamine 11, glutamate 69, serine 138, glycine 142, threonine 143, and glycine 144. Residue glutamate 69 participates in Mg(2+) binding. Serine 172 is subject to Phosphoserine; by CDK1. Residues asparagine 204 and asparagine 226 each coordinate GTP. A disordered region spans residues 423–444 (QQYQDATAEEEEDEEYAEEEVA). The span at 429-444 (TAEEEEDEEYAEEEVA) shows a compositional bias: acidic residues. A 5-glutamyl polyglutamate modification is found at glutamate 436.

It belongs to the tubulin family. Dimer of alpha and beta chains. A typical microtubule is a hollow water-filled tube with an outer diameter of 25 nm and an inner diameter of 15 nM. Alpha-beta heterodimers associate head-to-tail to form protofilaments running lengthwise along the microtubule wall with the beta-tubulin subunit facing the microtubule plus end conferring a structural polarity. Microtubules usually have 13 protofilaments but different protofilament numbers can be found in some organisms and specialized cells. Mg(2+) serves as cofactor. In terms of processing, some glutamate residues at the C-terminus are polyglutamylated, resulting in polyglutamate chains on the gamma-carboxyl group. Polyglutamylation plays a key role in microtubule severing by spastin (SPAST). SPAST preferentially recognizes and acts on microtubules decorated with short polyglutamate tails: severing activity by SPAST increases as the number of glutamates per tubulin rises from one to eight, but decreases beyond this glutamylation threshold. Glutamylation is also involved in cilia motility. Post-translationally, some glutamate residues at the C-terminus are monoglycylated but not polyglycylated due to the absence of functional TTLL10 in human. Monoglycylation is mainly limited to tubulin incorporated into cilia and flagella axonemes, which is required for their stability and maintenance. Flagella glycylation controls sperm motility. Both polyglutamylation and monoglycylation can coexist on the same protein on adjacent residues, and lowering glycylation levels increases polyglutamylation, and reciprocally. Phosphorylated on Ser-172 by CDK1 during the cell cycle, from metaphase to telophase, but not in interphase. This phosphorylation inhibits tubulin incorporation into microtubules. As to expression, expressed at a high level in oocytes, at different stages of development.

It is found in the cytoplasm. The protein localises to the cytoskeleton. The protein resides in the spindle. Its function is as follows. Tubulin is the major constituent of microtubules, a cylinder consisting of laterally associated linear protofilaments composed of alpha- and beta-tubulin heterodimers. Microtubules grow by the addition of GTP-tubulin dimers to the microtubule end, where a stabilizing cap forms. Below the cap, tubulin dimers are in GDP-bound state, owing to GTPase activity of alpha-tubulin. TUBB8 has a key role in meiotic spindle assembly and oocyte maturation. This Homo sapiens (Human) protein is Tubulin beta-8 chain.